The following is a 153-amino-acid chain: Nucleoside diphosphate kinase (153 aa).

Positions 11, 59, 87, 93, 104, and 114 each coordinate ATP. Residue His-117 is the Pros-phosphohistidine intermediate of the active site.

This sequence belongs to the NDK family. In terms of assembly, homotrimer. It depends on Mg(2+) as a cofactor.

It catalyses the reaction a 2'-deoxyribonucleoside 5'-diphosphate + ATP = a 2'-deoxyribonucleoside 5'-triphosphate + ADP. The enzyme catalyses a ribonucleoside 5'-diphosphate + ATP = a ribonucleoside 5'-triphosphate + ADP. Functionally, major role in the synthesis of nucleoside triphosphates other than ATP. The ATP gamma phosphate is transferred to the NDP beta phosphate via a ping-pong mechanism, using a phosphorylated active-site intermediate. The chain is Nucleoside diphosphate kinase (ndk1) from Aspergillus fumigatus (strain ATCC MYA-4609 / CBS 101355 / FGSC A1100 / Af293) (Neosartorya fumigata).